The primary structure comprises 609 residues: Transcription factor ntnD (609 aa).

The segment at residues 1-7 (MCVGIEC) is a DNA-binding region (zn(2)-C6 fungal-type). A disordered region spans residues 46-104 (FRDQNESSLNRIHNRRTSNSQPSTRSINNTTTIPASNNEPLALSQPPSASSQNQVEKDQ). Positions 51–84 (ESSLNRIHNRRTSNSQPSTRSINNTTTIPASNNE) are enriched in polar residues. Low complexity predominate over residues 85–97 (PLALSQPPSASSQ).

This sequence belongs to the TRI10 transcription regulator family.

The protein localises to the nucleus. Functionally, transcription factor; part of the gene cluster that mediates the biosynthesis of meroterpenoids. This chain is Transcription factor ntnD, found in Nectria sp.